The chain runs to 283 residues: Pantothenate synthetase (283 aa).

Position 31 to 38 (31 to 38 (MGALHDGH)) interacts with ATP. Histidine 38 (proton donor) is an active-site residue. Glutamine 62 is a (R)-pantoate binding site. Glutamine 62 lines the beta-alanine pocket. 148 to 151 (GKKD) is an ATP binding site. A (R)-pantoate-binding site is contributed by glutamine 154. ATP contacts are provided by residues valine 177 and 185-188 (KSSR).

This sequence belongs to the pantothenate synthetase family. Homodimer.

The protein resides in the cytoplasm. It catalyses the reaction (R)-pantoate + beta-alanine + ATP = (R)-pantothenate + AMP + diphosphate + H(+). The protein operates within cofactor biosynthesis; (R)-pantothenate biosynthesis; (R)-pantothenate from (R)-pantoate and beta-alanine: step 1/1. Functionally, catalyzes the condensation of pantoate with beta-alanine in an ATP-dependent reaction via a pantoyl-adenylate intermediate. The protein is Pantothenate synthetase of Staphylococcus aureus (strain MSSA476).